Here is a 218-residue protein sequence, read N- to C-terminus: Large ribosomal subunit protein uL3 (218 aa).

Residue glutamine 153 is modified to N5-methylglutamine.

This sequence belongs to the universal ribosomal protein uL3 family. As to quaternary structure, part of the 50S ribosomal subunit. Forms a cluster with proteins L14 and L19. Methylated by PrmB.

One of the primary rRNA binding proteins, it binds directly near the 3'-end of the 23S rRNA, where it nucleates assembly of the 50S subunit. This chain is Large ribosomal subunit protein uL3, found in Alkalilimnicola ehrlichii (strain ATCC BAA-1101 / DSM 17681 / MLHE-1).